Consider the following 416-residue polypeptide: UDP-N-acetylglucosamine 1-carboxyvinyltransferase (416 aa).

22–23 (KN) is a binding site for phosphoenolpyruvate. Residue Arg-92 coordinates UDP-N-acetyl-alpha-D-glucosamine. Residue Cys-116 is the Proton donor of the active site. Residue Cys-116 is modified to 2-(S-cysteinyl)pyruvic acid O-phosphothioketal. UDP-N-acetyl-alpha-D-glucosamine contacts are provided by residues 121 to 125 (RPVDQ), Asp-304, and Ile-326.

This sequence belongs to the EPSP synthase family. MurA subfamily.

The protein localises to the cytoplasm. The catalysed reaction is phosphoenolpyruvate + UDP-N-acetyl-alpha-D-glucosamine = UDP-N-acetyl-3-O-(1-carboxyvinyl)-alpha-D-glucosamine + phosphate. The protein operates within cell wall biogenesis; peptidoglycan biosynthesis. Cell wall formation. Adds enolpyruvyl to UDP-N-acetylglucosamine. This Aromatoleum aromaticum (strain DSM 19018 / LMG 30748 / EbN1) (Azoarcus sp. (strain EbN1)) protein is UDP-N-acetylglucosamine 1-carboxyvinyltransferase.